We begin with the raw amino-acid sequence, 300 residues long: 5'-adenylylsulfate reductase-like 5 (300 aa).

The N-terminal stretch at 1–23 (MDSRVSILFVCAIAVSCFTSGSA) is a signal peptide. The 121-residue stretch at 41–161 (FDLEAKCPPS…LIEFYEEATG (121 aa)) folds into the Thioredoxin domain. N-linked (GlcNAc...) asparagine glycosylation is present at Asn136. Residues 202-222 (FLVLSLLFICLQMAILVFPIA) form a helical membrane-spanning segment.

It is found in the membrane. The protein is 5'-adenylylsulfate reductase-like 5 (APRL5) of Arabidopsis thaliana (Mouse-ear cress).